Reading from the N-terminus, the 863-residue chain is DNA mismatch repair protein MutS (863 aa).

Position 615-622 (615-622 (GPNMAGKS)) interacts with ATP.

Belongs to the DNA mismatch repair MutS family.

Its function is as follows. This protein is involved in the repair of mismatches in DNA. It is possible that it carries out the mismatch recognition step. This protein has a weak ATPase activity. The chain is DNA mismatch repair protein MutS from Pelotomaculum thermopropionicum (strain DSM 13744 / JCM 10971 / SI).